The sequence spans 164 residues: UPF0114 protein YqhA (164 aa).

Transmembrane regions (helical) follow at residues 15–35, 53–73, and 136–156; these read LLAPVYFGLSLALIALALKFF, LILVLLSLVDMTLVGGLLVMV, and LMWYVIIHLTFVLSAFVMGYL.

Belongs to the UPF0114 family.

Its subcellular location is the cell membrane. This chain is UPF0114 protein YqhA, found in Salmonella agona (strain SL483).